The primary structure comprises 319 residues: Formimidoylglutamase (319 aa).

6 residues coordinate Mn(2+): His131, Asp154, His156, Asp158, Cys248, and Asp250.

Belongs to the arginase family. The cofactor is Mn(2+).

It carries out the reaction N-formimidoyl-L-glutamate + H2O = formamide + L-glutamate. It functions in the pathway amino-acid degradation; L-histidine degradation into L-glutamate; L-glutamate from N-formimidoyl-L-glutamate (hydrolase route): step 1/1. Its function is as follows. Catalyzes the conversion of N-formimidoyl-L-glutamate to L-glutamate and formamide. This chain is Formimidoylglutamase, found in Legionella pneumophila subsp. pneumophila (strain Philadelphia 1 / ATCC 33152 / DSM 7513).